The primary structure comprises 218 residues: Cytochrome P450 3A19 (218 aa).

Cys153 is a heme binding site.

The protein belongs to the cytochrome P450 family. It depends on heme as a cofactor.

Its subcellular location is the endoplasmic reticulum membrane. It is found in the microsome membrane. The catalysed reaction is an organic molecule + reduced [NADPH--hemoprotein reductase] + O2 = an alcohol + oxidized [NADPH--hemoprotein reductase] + H2O + H(+). Its function is as follows. Cytochromes P450 are a group of heme-thiolate monooxygenases. In liver microsomes, this enzyme is involved in an NADPH-dependent electron transport pathway. It oxidizes a variety of structurally unrelated compounds, including steroids, fatty acids, and xenobiotics. The polypeptide is Cytochrome P450 3A19 (CYP3A19) (Capra hircus aegagrus (Wild goat)).